Reading from the N-terminus, the 296-residue chain is Large ribosomal subunit protein uL29m (296 aa).

Residues 1-19 (MSITSIRALLRSAVSLART) constitute a mitochondrion transit peptide.

It belongs to the universal ribosomal protein uL29 family. Component of the mitochondrial large ribosomal subunit. Mature mitochondrial ribosomes consist of a small (37S) and a large (54S) subunit. The 37S subunit contains at least 33 different proteins and 1 molecule of RNA (15S). The 54S subunit contains at least 45 different proteins and 1 molecule of RNA (21S).

It localises to the mitochondrion. The protein is Large ribosomal subunit protein uL29m (MRPL4) of Lodderomyces elongisporus (strain ATCC 11503 / CBS 2605 / JCM 1781 / NBRC 1676 / NRRL YB-4239) (Yeast).